Consider the following 465-residue polypeptide: Coumaroyl-CoA:anthocyanidin 3-O-glucoside-6''-O-coumaroyltransferase 2 (465 aa).

An N-acetylmethionine modification is found at methionine 1. Active-site proton acceptor residues include histidine 173 and aspartate 406.

It belongs to the plant acyltransferase family. As to expression, highly expressed in flowers, and leaves. Lower levels of expression in stems, roots and siliques.

Functionally, involved in the acylation of the 6'' position of the 3-O-glucose residue of anthocyanin. Also able to use flavonol 3-glucosides as the acyl acceptor. The protein is Coumaroyl-CoA:anthocyanidin 3-O-glucoside-6''-O-coumaroyltransferase 2 (3AT2) of Arabidopsis thaliana (Mouse-ear cress).